The sequence spans 305 residues: Glycine--tRNA ligase alpha subunit (305 aa).

The protein belongs to the class-II aminoacyl-tRNA synthetase family. In terms of assembly, tetramer of two alpha and two beta subunits.

It is found in the cytoplasm. It carries out the reaction tRNA(Gly) + glycine + ATP = glycyl-tRNA(Gly) + AMP + diphosphate. The sequence is that of Glycine--tRNA ligase alpha subunit from Streptococcus pneumoniae (strain P1031).